The following is a 395-amino-acid chain: ATP synthase subunit beta, chloroplastic (395 aa).

72 to 79 contributes to the ATP binding site; it reads GGAGVGKT.

This sequence belongs to the ATPase alpha/beta chains family. As to quaternary structure, F-type ATPases have 2 components, CF(1) - the catalytic core - and CF(0) - the membrane proton channel. CF(1) has five subunits: alpha(3), beta(3), gamma(1), delta(1), epsilon(1). CF(0) has four main subunits: a(1), b(1), b'(1) and c(9-12).

The protein resides in the plastid. It is found in the chloroplast thylakoid membrane. It catalyses the reaction ATP + H2O + 4 H(+)(in) = ADP + phosphate + 5 H(+)(out). Functionally, produces ATP from ADP in the presence of a proton gradient across the membrane. The catalytic sites are hosted primarily by the beta subunits. The protein is ATP synthase subunit beta, chloroplastic of Microlepia platyphylla (Plate fern).